We begin with the raw amino-acid sequence, 210 residues long: Large ribosomal subunit protein uL3 (210 aa).

The interval 133–152 (ATHGNSLSHRVHGSTGQNQT) is disordered. The residue at position 151 (glutamine 151) is an N5-methylglutamine.

Belongs to the universal ribosomal protein uL3 family. As to quaternary structure, part of the 50S ribosomal subunit. Forms a cluster with proteins L14 and L19. Methylated by PrmB.

Functionally, one of the primary rRNA binding proteins, it binds directly near the 3'-end of the 23S rRNA, where it nucleates assembly of the 50S subunit. The polypeptide is Large ribosomal subunit protein uL3 (Francisella tularensis subsp. holarctica (strain FTNF002-00 / FTA)).